A 219-amino-acid chain; its full sequence is Ras-related protein Rab-3 (219 aa).

GTP is bound by residues 29–37 (GNSSVGKTS), 48–54 (TSAFVST), 77–81 (DTAGQ), 135–138 (NKCD), and 165–167 (SAK). Positions 51–59 (FVSTVGIDF) match the Effector region motif. A disordered region spans residues 191 to 219 (LDKDPQQQPKGQKLEANPTQKPAQQQCNC). Residues 207–219 (NPTQKPAQQQCNC) show a composition bias toward polar residues. 2 S-geranylgeranyl cysteine lipidation sites follow: cysteine 217 and cysteine 219. Cysteine 219 carries the cysteine methyl ester modification.

The protein belongs to the small GTPase superfamily. Rab family.

The protein resides in the cell membrane. In terms of biological role, involved in exocytosis by regulating a late step in synaptic vesicle fusion. Could play a role in neurotransmitter release by regulating membrane flow in the nerve terminal. Plays a role in the recruitment of endophilin unc-57 to synaptic vesicles. Probably by controlling dense-core vesicle trafficking, plays a role in the AVG neuron-mediated formation of the right axon tract of the ventral nerve cord. This is Ras-related protein Rab-3 (rab-3) from Caenorhabditis elegans.